The primary structure comprises 297 residues: Probable ABC transporter phosphite binding protein PhnD1 (297 aa).

The signal sequence occupies residues 1 to 24 (MFNLKYFLVSSSLLFSVFSSPVFS).

It belongs to the phosphate/phosphite/phosphonate binding protein family. As to quaternary structure, the complex may be composed of two ATP-binding proteins (PhnC1), two transmembrane proteins (PhnE1) and a solute-binding protein (PhnD1).

The protein localises to the periplasm. In terms of biological role, probably part of the ABC transporter complex PhnD1C1E1. Binds strongly to inorganic phosphite and with very weak affinities to methylphosphonate (MPn) and phosphate. In Prochlorococcus marinus (strain MIT 9301), this protein is Probable ABC transporter phosphite binding protein PhnD1.